A 674-amino-acid chain; its full sequence is ATP-dependent DNA helicase Rep (674 aa).

The UvrD-like helicase ATP-binding domain occupies 1–280 (MRLNPGQQHA…IKLEQNYRSS (280 aa)). ATP contacts are provided by residues 22 to 29 (AGAGSGKT) and arginine 278. The UvrD-like helicase C-terminal domain occupies 281 to 562 (GRILKAANIL…QLMTLHASKG (282 aa)).

This sequence belongs to the helicase family. UvrD subfamily. As to quaternary structure, homodimer.

The catalysed reaction is Couples ATP hydrolysis with the unwinding of duplex DNA by translocating in the 3'-5' direction.. It catalyses the reaction ATP + H2O = ADP + phosphate + H(+). In terms of biological role, rep helicase is a single-stranded DNA-dependent ATPase involved in DNA replication; it can initiate unwinding at a nick in the DNA. It binds to the single-stranded DNA and acts in a progressive fashion along the DNA in the 3' to 5' direction. The sequence is that of ATP-dependent DNA helicase Rep from Salmonella typhimurium (strain LT2 / SGSC1412 / ATCC 700720).